A 413-amino-acid chain; its full sequence is Histidine--tRNA ligase (413 aa).

It belongs to the class-II aminoacyl-tRNA synthetase family. Homodimer.

The protein localises to the cytoplasm. The enzyme catalyses tRNA(His) + L-histidine + ATP = L-histidyl-tRNA(His) + AMP + diphosphate + H(+). The sequence is that of Histidine--tRNA ligase from Geobacter sulfurreducens (strain ATCC 51573 / DSM 12127 / PCA).